The sequence spans 96 residues: Large ribosomal subunit protein bL28 (96 aa).

This sequence belongs to the bacterial ribosomal protein bL28 family.

This chain is Large ribosomal subunit protein bL28, found in Methylobacterium nodulans (strain LMG 21967 / CNCM I-2342 / ORS 2060).